Reading from the N-terminus, the 287-residue chain is ATP synthase gamma chain (287 aa).

Belongs to the ATPase gamma chain family. As to quaternary structure, F-type ATPases have 2 components, CF(1) - the catalytic core - and CF(0) - the membrane proton channel. CF(1) has five subunits: alpha(3), beta(3), gamma(1), delta(1), epsilon(1). CF(0) has three main subunits: a, b and c.

The protein resides in the cell inner membrane. Its function is as follows. Produces ATP from ADP in the presence of a proton gradient across the membrane. The gamma chain is believed to be important in regulating ATPase activity and the flow of protons through the CF(0) complex. In Xylella fastidiosa (strain M23), this protein is ATP synthase gamma chain.